Reading from the N-terminus, the 270-residue chain is Cell division protein DivIB (270 aa).

Residues 1 to 28 (MAENKRVISIENRIPELKKYRKKKLVRH) lie on the Cytoplasmic side of the membrane. A helical membrane pass occupies residues 29-49 (LAILIGIFVILIAITLYFLSP). At 50-270 (LSKLDKIAVS…AAKEKKETNE (221 aa)) the chain is on the extracellular side. A POTRA domain is found at 51–119 (SKLDKIAVSG…NDVQINITEF (69 aa)).

It belongs to the FtsQ/DivIB family. DivIB subfamily.

It localises to the cell membrane. In terms of biological role, cell division protein that may be involved in stabilizing or promoting the assembly of the division complex. The polypeptide is Cell division protein DivIB (Listeria monocytogenes serovar 1/2a (strain ATCC BAA-679 / EGD-e)).